Consider the following 346-residue polypeptide: Methionine import ATP-binding protein MetN (346 aa).

Residues 2–243 (VRFEGISKTY…PKHPITQSFL (242 aa)) enclose the ABC transporter domain. 40-47 (GRSGAGKS) lines the ATP pocket.

It belongs to the ABC transporter superfamily. Methionine importer (TC 3.A.1.24) family. In terms of assembly, the complex is composed of two ATP-binding proteins (MetN), two transmembrane proteins (MetI) and a solute-binding protein (MetQ).

The protein localises to the cell inner membrane. The catalysed reaction is L-methionine(out) + ATP + H2O = L-methionine(in) + ADP + phosphate + H(+). It catalyses the reaction D-methionine(out) + ATP + H2O = D-methionine(in) + ADP + phosphate + H(+). Functionally, part of the ABC transporter complex MetNIQ involved in methionine import. Responsible for energy coupling to the transport system. The polypeptide is Methionine import ATP-binding protein MetN (Bradyrhizobium diazoefficiens (strain JCM 10833 / BCRC 13528 / IAM 13628 / NBRC 14792 / USDA 110)).